The sequence spans 290 residues: Porphobilinogen deaminase (290 aa).

Cys238 is modified (S-(dipyrrolylmethanemethyl)cysteine).

Belongs to the HMBS family. Monomer. It depends on dipyrromethane as a cofactor.

It catalyses the reaction 4 porphobilinogen + H2O = hydroxymethylbilane + 4 NH4(+). The protein operates within porphyrin-containing compound metabolism; protoporphyrin-IX biosynthesis; coproporphyrinogen-III from 5-aminolevulinate: step 2/4. Functionally, tetrapolymerization of the monopyrrole PBG into the hydroxymethylbilane pre-uroporphyrinogen in several discrete steps. This is Porphobilinogen deaminase from Caldicellulosiruptor saccharolyticus (strain ATCC 43494 / DSM 8903 / Tp8T 6331).